The primary structure comprises 455 residues: E3 ubiquitin-protein ligase IPI1 (455 aa).

Residues 1–42 (MGAEEEEEPASAVGREGGGGGGGARAAGAGAGGDTADDDDSG) form a disordered region. The span at 15 to 33 (REGGGGGGGARAAGAGAGG) shows a compositional bias: gly residues. An RING-type; atypical zinc finger spans residues 51–97 (CSICLDAVVAGGGDRSTARLQCGHEFHLDCIGSAFNAKGVMQCPNCR). Disordered stretches follow at residues 286–311 (LDSDSQQRGSLPSVYGNGSGSRSRIP) and 426–455 (QWIGAGRSPPPPPPPPADNSSYRQMHIPRM). A compositionally biased stretch (pro residues) spans 433–442 (SPPPPPPPPA).

In terms of assembly, interacts with SPL14/IPA1.

Its subcellular location is the nucleus. The enzyme catalyses S-ubiquitinyl-[E2 ubiquitin-conjugating enzyme]-L-cysteine + [acceptor protein]-L-lysine = [E2 ubiquitin-conjugating enzyme]-L-cysteine + N(6)-ubiquitinyl-[acceptor protein]-L-lysine.. The protein operates within protein modification; protein ubiquitination. Its function is as follows. Functions as an E3 ligase that promotes polyubiquitination of SPL14/IPA1 for subsequent proteasomal degradation. Regulates plant architecture by modulating SPL14/IPA1 abundance. Promotes the degradation of SPL14/IPA1 in panicles, while it stabilizes SPL14/IPA1 in shoot apices. Ubiquitinates the SPL14/IPA1-mediated complex with 'Lys-48'-linked polyubiquitin in panicles and 'Lys-63'-linked polyubiquitin chains in the shoot apex. This Oryza sativa subsp. japonica (Rice) protein is E3 ubiquitin-protein ligase IPI1.